The sequence spans 455 residues: Glutamyl-tRNA reductase (455 aa).

Substrate contacts are provided by residues 49-52, Ser109, 114-116, and Gln120; these read TCNR and EAQ. The Nucleophile role is filled by Cys50. Residue 190–195 participates in NADP(+) binding; sequence GAGAMG.

It belongs to the glutamyl-tRNA reductase family. Homodimer.

The enzyme catalyses (S)-4-amino-5-oxopentanoate + tRNA(Glu) + NADP(+) = L-glutamyl-tRNA(Glu) + NADPH + H(+). It participates in porphyrin-containing compound metabolism; protoporphyrin-IX biosynthesis; 5-aminolevulinate from L-glutamyl-tRNA(Glu): step 1/2. Catalyzes the NADPH-dependent reduction of glutamyl-tRNA(Glu) to glutamate 1-semialdehyde (GSA). The sequence is that of Glutamyl-tRNA reductase from Salinispora tropica (strain ATCC BAA-916 / DSM 44818 / JCM 13857 / NBRC 105044 / CNB-440).